The chain runs to 316 residues: Aspartate carbamoyltransferase catalytic subunit (316 aa).

Carbamoyl phosphate contacts are provided by R56 and T57. K84 lines the L-aspartate pocket. Positions 106, 139, and 142 each coordinate carbamoyl phosphate. L-aspartate contacts are provided by R172 and R226. Positions 267 and 268 each coordinate carbamoyl phosphate.

This sequence belongs to the aspartate/ornithine carbamoyltransferase superfamily. ATCase family. As to quaternary structure, heterododecamer (2C3:3R2) of six catalytic PyrB chains organized as two trimers (C3), and six regulatory PyrI chains organized as three dimers (R2).

The enzyme catalyses carbamoyl phosphate + L-aspartate = N-carbamoyl-L-aspartate + phosphate + H(+). The protein operates within pyrimidine metabolism; UMP biosynthesis via de novo pathway; (S)-dihydroorotate from bicarbonate: step 2/3. Its function is as follows. Catalyzes the condensation of carbamoyl phosphate and aspartate to form carbamoyl aspartate and inorganic phosphate, the committed step in the de novo pyrimidine nucleotide biosynthesis pathway. The protein is Aspartate carbamoyltransferase catalytic subunit of Mycobacterium sp. (strain MCS).